We begin with the raw amino-acid sequence, 635 residues long: Threonine--tRNA ligase (635 aa).

Residues 1–61 (MVSIRLPDGS…DHDVALAIVT (61 aa)) form the TGS domain. The segment at 242–533 (DHRKLGKQLD…LIEHHAGAMP (292 aa)) is catalytic. Zn(2+) is bound by residues Cys333, His384, and His510.

Belongs to the class-II aminoacyl-tRNA synthetase family. As to quaternary structure, homodimer. The cofactor is Zn(2+).

It localises to the cytoplasm. It carries out the reaction tRNA(Thr) + L-threonine + ATP = L-threonyl-tRNA(Thr) + AMP + diphosphate + H(+). Functionally, catalyzes the attachment of threonine to tRNA(Thr) in a two-step reaction: L-threonine is first activated by ATP to form Thr-AMP and then transferred to the acceptor end of tRNA(Thr). Also edits incorrectly charged L-seryl-tRNA(Thr). The polypeptide is Threonine--tRNA ligase (Paraburkholderia phytofirmans (strain DSM 17436 / LMG 22146 / PsJN) (Burkholderia phytofirmans)).